Consider the following 227-residue polypeptide: Protein FdhD (227 aa).

210–215 (FARNGK) contacts Mo-bis(molybdopterin guanine dinucleotide).

This sequence belongs to the FdhD family.

It is found in the cytoplasm. Functionally, required for formate dehydrogenase (FDH) activity. This chain is Protein FdhD, found in Methanocaldococcus jannaschii (strain ATCC 43067 / DSM 2661 / JAL-1 / JCM 10045 / NBRC 100440) (Methanococcus jannaschii).